Here is a 76-residue protein sequence, read N- to C-terminus: Conotoxin Cal29b (76 aa).

The first 43 residues, methionine 1–arginine 43, serve as a signal peptide directing secretion.

This sequence belongs to the conotoxin O1 superfamily. Post-translationally, may contain 4 disulfide bonds. In terms of tissue distribution, expressed by the venom duct.

Its subcellular location is the secreted. Functionally, is able to inhibit the growth of Mycobacterium tuberculosis (MIC=0.22-3.52 uM against strain H37Rv and 2 multidrug-resistant strains). May also show neurotoxic activity. In Californiconus californicus (California cone), this protein is Conotoxin Cal29b.